Here is a 520-residue protein sequence, read N- to C-terminus: NADH-quinone oxidoreductase subunit N (520 aa).

Helical transmembrane passes span 13–33, 55–75, 87–107, 115–135, 141–161, 176–196, 219–239, 250–270, 285–305, 313–333, 339–359, 383–403, 425–445, and 468–488; these read ALLP…ASVW, FGVI…GDGA, GFRW…LMLL, AAFG…MMVL, LMFV…LAGV, FLLG…LFGA, FMSG…AAPF, APLP…FAVF, WHMG…VFAL, MLAY…IVGD, ALIF…GVLI, WLAI…VLGG, ILAV…LAVV, and SLIA…TPIM. The span at 494–508 shows a compositional bias: low complexity; sequence ATTTTSPTSNPAAPR. The interval 494 to 520 is disordered; the sequence is ATTTTSPTSNPAAPRGEVRLQTASVPR.

Belongs to the complex I subunit 2 family. As to quaternary structure, NDH-1 is composed of 14 different subunits. Subunits NuoA, H, J, K, L, M, N constitute the membrane sector of the complex.

The protein resides in the cell inner membrane. The catalysed reaction is a quinone + NADH + 5 H(+)(in) = a quinol + NAD(+) + 4 H(+)(out). NDH-1 shuttles electrons from NADH, via FMN and iron-sulfur (Fe-S) centers, to quinones in the respiratory chain. The immediate electron acceptor for the enzyme in this species is believed to be ubiquinone. Couples the redox reaction to proton translocation (for every two electrons transferred, four hydrogen ions are translocated across the cytoplasmic membrane), and thus conserves the redox energy in a proton gradient. The protein is NADH-quinone oxidoreductase subunit N of Gemmatimonas aurantiaca (strain DSM 14586 / JCM 11422 / NBRC 100505 / T-27).